The sequence spans 237 residues: 1-(5-phosphoribosyl)-5-[(5-phosphoribosylamino)methylideneamino] imidazole-4-carboxamide isomerase (237 aa).

Asp8 serves as the catalytic Proton acceptor. Residue Asp130 is the Proton donor of the active site.

Belongs to the HisA/HisF family.

The protein localises to the cytoplasm. The catalysed reaction is 1-(5-phospho-beta-D-ribosyl)-5-[(5-phospho-beta-D-ribosylamino)methylideneamino]imidazole-4-carboxamide = 5-[(5-phospho-1-deoxy-D-ribulos-1-ylimino)methylamino]-1-(5-phospho-beta-D-ribosyl)imidazole-4-carboxamide. It participates in amino-acid biosynthesis; L-histidine biosynthesis; L-histidine from 5-phospho-alpha-D-ribose 1-diphosphate: step 4/9. The protein is 1-(5-phosphoribosyl)-5-[(5-phosphoribosylamino)methylideneamino] imidazole-4-carboxamide isomerase of Caldicellulosiruptor saccharolyticus (strain ATCC 43494 / DSM 8903 / Tp8T 6331).